The following is a 110-amino-acid chain: Large ribosomal subunit protein uL22 (110 aa).

It belongs to the universal ribosomal protein uL22 family. As to quaternary structure, part of the 50S ribosomal subunit.

Its function is as follows. This protein binds specifically to 23S rRNA; its binding is stimulated by other ribosomal proteins, e.g. L4, L17, and L20. It is important during the early stages of 50S assembly. It makes multiple contacts with different domains of the 23S rRNA in the assembled 50S subunit and ribosome. The globular domain of the protein is located near the polypeptide exit tunnel on the outside of the subunit, while an extended beta-hairpin is found that lines the wall of the exit tunnel in the center of the 70S ribosome. The chain is Large ribosomal subunit protein uL22 from Saccharophagus degradans (strain 2-40 / ATCC 43961 / DSM 17024).